Consider the following 346-residue polypeptide: Annexin A1 (346 aa).

Residue Ala2 is modified to N-acetylalanine. Ser5 carries the phosphoserine; by TRPM7 modification. An Isoglutamyl lysine isopeptide (Gln-Lys) (interchain with K-?) cross-link involves residue Gln19. Residue Tyr21 is modified to Phosphotyrosine; by EGFR. Residues Ser34 and Ser37 each carry the phosphoserine modification. Phosphothreonine is present on Thr41. Annexin repeat units lie at residues 42 to 113 (FNPS…ALLK), 114 to 185 (TPAQ…SLAK), 197 to 269 (DLAD…VIVK), and 273 to 344 (SQPM…ALCG). At Lys58 the chain carries N6-acetyllysine. Residues Gly59, Val60, Glu62, Lys97, Leu100, Glu105, Met127, Gly129, Gly131, Thr132, and Glu134 each coordinate Ca(2+). Phosphothreonine is present on Thr136. Ca(2+) is bound by residues Asp171, Gly210, and Arg213. Lys214 participates in a covalent cross-link: Glycyl lysine isopeptide (Lys-Gly) (interchain with G-Cter in SUMO1); alternate. Lys214 participates in a covalent cross-link: Glycyl lysine isopeptide (Lys-Gly) (interchain with G-Cter in SUMO2); alternate. Residue Gly215 participates in Ca(2+) binding. Lys239 is modified (N6-acetyllysine). Positions 253, 255, and 256 each coordinate Ca(2+). Residue Lys257 forms a Glycyl lysine isopeptide (Lys-Gly) (interchain with G-Cter in SUMO1) linkage. The Ca(2+) site is built by Glu261, Met286, Gly288, and Gly290. Lys312 is subject to N6-acetyllysine. Cys324 and Cys343 are joined by a disulfide. Ca(2+) is bound by residues Leu328, Glu330, and Thr331. Lys332 participates in a covalent cross-link: Glycyl lysine isopeptide (Lys-Gly) (interchain with G-Cter in SUMO1). Ca(2+) is bound at residue Glu336.

Belongs to the annexin family. As to quaternary structure, homodimer; non-covalently linked. Homodimer; linked by transglutamylation. Homodimers linked by transglutamylation are observed in placenta, but not in other tissues. Interacts with S100A11. Heterotetramer, formed by two molecules each of S100A11 and ANXA1. Interacts with DYSF. Interacts with EGFR. Post-translationally, phosphorylated by protein kinase C, EGFR and TRPM7. Phosphorylated in response to EGF treatment. In terms of processing, sumoylated. Proteolytically cleaved by cathepsin CTSG to release the active N-terminal peptide Ac2-26. In terms of tissue distribution, detected on surface epithelia and mucosal glands in nasal cavity, trachea, bronchi and bronchioles. Detected in blood vessel endothelial cells. Detected in neutrophils (at protein level).

Its subcellular location is the nucleus. It is found in the cytoplasm. The protein localises to the cell projection. The protein resides in the cilium. It localises to the basolateral cell membrane. Its subcellular location is the lateral cell membrane. It is found in the cell membrane. The protein localises to the apical cell membrane. The protein resides in the membrane. It localises to the endosome membrane. Its subcellular location is the secreted. It is found in the extracellular space. The protein localises to the early endosome. The protein resides in the cytoplasmic vesicle membrane. It localises to the extracellular exosome. Its subcellular location is the cytoplasmic vesicle. It is found in the secretory vesicle lumen. The protein localises to the phagocytic cup. Its function is as follows. Plays important roles in the innate immune response as effector of glucocorticoid-mediated responses and regulator of the inflammatory process. Has anti-inflammatory activity. Plays a role in glucocorticoid-mediated down-regulation of the early phase of the inflammatory response. Contributes to the adaptive immune response by enhancing signaling cascades that are triggered by T-cell activation, regulates differentiation and proliferation of activated T-cells. Promotes the differentiation of T-cells into Th1 cells and negatively regulates differentiation into Th2 cells. Has no effect on unstimulated T-cells. Negatively regulates hormone exocytosis via activation of the formyl peptide receptors and reorganization of the actin cytoskeleton. Has high affinity for Ca(2+) and can bind up to eight Ca(2+) ions. Displays Ca(2+)-dependent binding to phospholipid membranes. Plays a role in the formation of phagocytic cups and phagosomes. Plays a role in phagocytosis by mediating the Ca(2+)-dependent interaction between phagosomes and the actin cytoskeleton. In terms of biological role, functions at least in part by activating the formyl peptide receptors and downstream signaling cascades. Promotes chemotaxis of granulocytes and monocytes via activation of the formyl peptide receptors. Promotes rearrangement of the actin cytoskeleton, cell polarization and cell migration. Promotes resolution of inflammation and wound healing. Acts via neutrophil N-formyl peptide receptors to enhance the release of CXCL2. This chain is Annexin A1 (ANXA1), found in Bos taurus (Bovine).